Reading from the N-terminus, the 141-residue chain is Large ribosomal subunit protein uL11 (141 aa).

Belongs to the universal ribosomal protein uL11 family. Part of the ribosomal stalk of the 50S ribosomal subunit. Interacts with L10 and the large rRNA to form the base of the stalk. L10 forms an elongated spine to which L12 dimers bind in a sequential fashion forming a multimeric L10(L12)X complex. In terms of processing, one or more lysine residues are methylated.

Functionally, forms part of the ribosomal stalk which helps the ribosome interact with GTP-bound translation factors. This chain is Large ribosomal subunit protein uL11, found in Nostoc punctiforme (strain ATCC 29133 / PCC 73102).